We begin with the raw amino-acid sequence, 432 residues long: Glutamyl-tRNA reductase (432 aa).

Residues 49 to 52 (TCNR), S109, 114 to 116 (EGQ), and Q120 each bind substrate. The Nucleophile role is filled by C50. An NADP(+)-binding site is contributed by 198 to 203 (GAGRMS).

It belongs to the glutamyl-tRNA reductase family. Homodimer.

It carries out the reaction (S)-4-amino-5-oxopentanoate + tRNA(Glu) + NADP(+) = L-glutamyl-tRNA(Glu) + NADPH + H(+). Its pathway is porphyrin-containing compound metabolism; protoporphyrin-IX biosynthesis; 5-aminolevulinate from L-glutamyl-tRNA(Glu): step 1/2. It participates in porphyrin-containing compound metabolism; chlorophyll biosynthesis. Its function is as follows. Catalyzes the NADPH-dependent reduction of glutamyl-tRNA(Glu) to glutamate 1-semialdehyde (GSA). The polypeptide is Glutamyl-tRNA reductase (Synechococcus sp. (strain CC9605)).